A 164-amino-acid polypeptide reads, in one-letter code: Large ribosomal subunit protein uL10 (164 aa).

It belongs to the universal ribosomal protein uL10 family. As to quaternary structure, part of the ribosomal stalk of the 50S ribosomal subunit. The N-terminus interacts with L11 and the large rRNA to form the base of the stalk. The C-terminus forms an elongated spine to which L12 dimers bind in a sequential fashion forming a multimeric L10(L12)X complex.

Forms part of the ribosomal stalk, playing a central role in the interaction of the ribosome with GTP-bound translation factors. This chain is Large ribosomal subunit protein uL10, found in Pseudoalteromonas translucida (strain TAC 125).